Here is a 312-residue protein sequence, read N- to C-terminus: Glycine--tRNA ligase alpha subunit (312 aa).

Belongs to the class-II aminoacyl-tRNA synthetase family. In terms of assembly, tetramer of two alpha and two beta subunits.

The protein resides in the cytoplasm. It catalyses the reaction tRNA(Gly) + glycine + ATP = glycyl-tRNA(Gly) + AMP + diphosphate. In Buchnera aphidicola subsp. Acyrthosiphon pisum (strain APS) (Acyrthosiphon pisum symbiotic bacterium), this protein is Glycine--tRNA ligase alpha subunit (glyQ).